A 305-amino-acid polypeptide reads, in one-letter code: UDP-3-O-acyl-N-acetylglucosamine deacetylase (305 aa).

Residues histidine 79, histidine 238, and aspartate 242 each contribute to the Zn(2+) site. Histidine 265 acts as the Proton donor in catalysis.

The protein belongs to the LpxC family. It depends on Zn(2+) as a cofactor.

It carries out the reaction a UDP-3-O-[(3R)-3-hydroxyacyl]-N-acetyl-alpha-D-glucosamine + H2O = a UDP-3-O-[(3R)-3-hydroxyacyl]-alpha-D-glucosamine + acetate. Its pathway is glycolipid biosynthesis; lipid IV(A) biosynthesis; lipid IV(A) from (3R)-3-hydroxytetradecanoyl-[acyl-carrier-protein] and UDP-N-acetyl-alpha-D-glucosamine: step 2/6. Its function is as follows. Catalyzes the hydrolysis of UDP-3-O-myristoyl-N-acetylglucosamine to form UDP-3-O-myristoylglucosamine and acetate, the committed step in lipid A biosynthesis. This is UDP-3-O-acyl-N-acetylglucosamine deacetylase from Vibrio cholerae serotype O1 (strain ATCC 39541 / Classical Ogawa 395 / O395).